Reading from the N-terminus, the 256-residue chain is 5'-nucleotidase SurE (256 aa).

A divalent metal cation is bound by residues D8, D9, S42, and N94.

Belongs to the SurE nucleotidase family. The cofactor is a divalent metal cation.

Its subcellular location is the cytoplasm. It carries out the reaction a ribonucleoside 5'-phosphate + H2O = a ribonucleoside + phosphate. Nucleotidase that shows phosphatase activity on nucleoside 5'-monophosphates. This is 5'-nucleotidase SurE from Ehrlichia chaffeensis (strain ATCC CRL-10679 / Arkansas).